The sequence spans 293 residues: DNA-directed RNA polymerase III subunit rpc6 (293 aa).

It belongs to the eukaryotic RPC34/RPC39 RNA polymerase subunit family. In terms of assembly, component of the RNA polymerase III (Pol III) complex.

The protein resides in the nucleus. Its function is as follows. DNA-dependent RNA polymerase catalyzes the transcription of DNA into RNA using the four ribonucleoside triphosphates as substrates. Specific peripheric component of RNA polymerase III which synthesizes small RNAs, such as 5S rRNA and tRNAs. May direct RNA Pol III binding to the TFIIIB-DNA complex. This is DNA-directed RNA polymerase III subunit rpc6 (polr3f) from Dictyostelium discoideum (Social amoeba).